The primary structure comprises 94 residues: Co-chaperonin GroES (94 aa).

It belongs to the GroES chaperonin family. In terms of assembly, heptamer of 7 subunits arranged in a ring. Interacts with the chaperonin GroEL.

It localises to the cytoplasm. Together with the chaperonin GroEL, plays an essential role in assisting protein folding. The GroEL-GroES system forms a nano-cage that allows encapsulation of the non-native substrate proteins and provides a physical environment optimized to promote and accelerate protein folding. GroES binds to the apical surface of the GroEL ring, thereby capping the opening of the GroEL channel. The protein is Co-chaperonin GroES of Staphylococcus epidermidis (strain ATCC 35984 / DSM 28319 / BCRC 17069 / CCUG 31568 / BM 3577 / RP62A).